A 1201-amino-acid polypeptide reads, in one-letter code: MARRTWAEGLTERCELIHKDIQERNERTDIINRAISVALENLKTHVGTLEHRFTEAQTWANDLLKEQHVALDGWERTFATLGNIPARKDFPFLGRPSTPTKGSDNSTGTLRDYLDTDEVHRAGSEAVDVSSRFARQVEDVEKAVGGIAADTQHLVDAAVPAGVDGVEGLLQEVETISRKIQSDYEHVLALPNNQKTLANISRLALSHTKDLLPSLLEVSAEIQTNLEEAARQYNAAVKAAFNHMRQISLIESRLADVQSQINNLNFQSDAFDVLYTVFHMPFVYGSILIESVRRREFSDKMKSDSLTLAEEMSVFQDEEQRRRKKWIKNMGDFVSMSDTTTPGIEVNLRGQEYEWPVVSRKEIEAYIEELKTKPGMASPVQELTQLYKELDAPTRLQRRRAKAFKQGSVFDLSRSSLLLRSDDMVRSLRDEKSKLEEKVKGSESRIRKLEDLLHRQSHMGRPASGNFSIDFPSSPASPHPDTLSRRSSVSSRRMSSNQSSEEKALVQRIVHLEAELAAERETVQKLQKDAHAERQSNTDKIQEVQSTKNDLIGNLEARQREFDDERRFLEGEMKKCRIRAEELEEELDRIMESREHEKQDADERIHQLELELQDAHARAEEEIQKATDLTAYTQTLKDAEESLRIRIEELEKQESERRERERESNQALQAAFMNLSPGGSVPVDTPSIVKAIEVLSEGLSIHAKNAEESSAKAVAESKELGERLSQLESEAEELRKTSEMRASELSLVKEELAQEKTRLENVASDLDDERSKFIALQSKLASGETGSDALQERVIEEERKLADLSQRLNEVEAQARKAEGEVLVWKERVEAMAETEQHAAGRVETCGTRSQELSKQLFRQVEKVEHMLEQLGFTVVRQNGDIVVQRSSKVTALSSTAESLSQSGVVSVRPDPTLLDWMHADTSQEETDRFMAFMESLYQFDVDIFSDAIVKRVKDIEVLARKWQKEARGYRDKYHRTQSEAHDKIAYRSFKEGDLALFLPTRNQAIRSWAAFNVGAPHYFLREQDVHKLHTRDWLLARITKIEERVVDLSKSMNGANPDRRSIGEASDGTSFDDENPFELSDGLRWYLLDAMEEKPGAPATPGLGKSTVAPAHVDARGSIRLKRTSAGGNVARTLSKSLDSRRNSSNSKKGPATPSQRGNDSTTDLARQADADSTTATAGSQPREAAPTSEEVRRDQLQGP.

The disordered stretch occupies residues Phe90–Thr109. Residues Ser97–Thr109 are compositionally biased toward polar residues. Positions Leu418–Leu452 form a coiled coil. 2 disordered regions span residues His458–Lys503 and Lys525–Gln545. The span at Arg485–Ser499 shows a compositional bias: low complexity. Residues Lys525–Gln542 are compositionally biased toward basic and acidic residues. Coiled-coil stretches lie at residues Arg566–Ala670 and Ser710–Arg828. Disordered regions lie at residues Ser1052–Asn1076 and Asp1115–Pro1201. Residues Arg1133–Leu1166 are compositionally biased toward polar residues. Basic and acidic residues predominate over residues Glu1191–Pro1201.

This sequence belongs to the ATG11 family. As to quaternary structure, homodimer and potential homooligomers.

It is found in the preautophagosomal structure membrane. Selective autophagy-specific protein required for pexophagy and mitophagy. In contrast to its Saccharomyces cerevisiae ATG11 ortholog, is not involved in non-selective autophagy nor in cytoplasm to vacuole transport (Cvt). The polypeptide is Autophagy-related protein 11 (Aspergillus oryzae (strain ATCC 42149 / RIB 40) (Yellow koji mold)).